A 519-amino-acid polypeptide reads, in one-letter code: tRNA-2-methylthio-N(6)-dimethylallyladenosine synthase (519 aa).

Residues 1-23 (MNEQQRKQQSQIRTEQANVDRIK) are disordered. Residues 7 to 17 (KQQSQIRTEQA) are compositionally biased toward polar residues. The 119-residue stretch at 76 to 194 (KKFLIRTYGC…LPHLVKEALF (119 aa)) folds into the MTTase N-terminal domain. Residues cysteine 85, cysteine 121, cysteine 155, cysteine 231, cysteine 235, and cysteine 238 each contribute to the [4Fe-4S] cluster site. The 234-residue stretch at 217–450 (RKGKIKAWVN…VNKQSAASMK (234 aa)) folds into the Radical SAM core domain. A TRAM domain is found at 450-513 (KDYAGKKVKV…TWSLNGVMVE (64 aa)).

The protein belongs to the methylthiotransferase family. MiaB subfamily. Monomer. It depends on [4Fe-4S] cluster as a cofactor.

It localises to the cytoplasm. The catalysed reaction is N(6)-dimethylallyladenosine(37) in tRNA + (sulfur carrier)-SH + AH2 + 2 S-adenosyl-L-methionine = 2-methylsulfanyl-N(6)-dimethylallyladenosine(37) in tRNA + (sulfur carrier)-H + 5'-deoxyadenosine + L-methionine + A + S-adenosyl-L-homocysteine + 2 H(+). Its function is as follows. Catalyzes the methylthiolation of N6-(dimethylallyl)adenosine (i(6)A), leading to the formation of 2-methylthio-N6-(dimethylallyl)adenosine (ms(2)i(6)A) at position 37 in tRNAs that read codons beginning with uridine. The protein is tRNA-2-methylthio-N(6)-dimethylallyladenosine synthase of Oceanobacillus iheyensis (strain DSM 14371 / CIP 107618 / JCM 11309 / KCTC 3954 / HTE831).